We begin with the raw amino-acid sequence, 98 residues long: Ferredoxin-3 (98 aa).

2 4Fe-4S ferredoxin-type domains span residues 18–47 and 66–95; these read FVEA…LQAL and VMSI…HSPL. The [4Fe-4S] cluster site is built by Cys-27, Cys-30, Cys-33, Cys-37, Cys-75, Cys-78, Cys-81, and Cys-85.

Homodimer. Requires [4Fe-4S] cluster as cofactor.

Its function is as follows. Ferredoxins are iron-sulfur proteins that transfer electrons in a wide variety of metabolic reactions. In Trichormus variabilis (strain ATCC 29413 / PCC 7937) (Anabaena variabilis), this protein is Ferredoxin-3 (fdxB).